The chain runs to 482 residues: Ras GTPase-activating protein-binding protein 2 (482 aa).

One can recognise an NTF2 domain in the interval V11–Y133. Acidic residues predominate over residues D140–E158. Disordered regions lie at residues D140–A171 and E187–D318. S141, S149, and S225 each carry phosphoserine. Residues E142–E220 are acidic disordered region. The span at E191–S225 shows a compositional bias: basic and acidic residues. T227 carries the phosphothreonine modification. S235 carries the post-translational modification Phosphoserine. Residues A247–G264 are compositionally biased toward polar residues. A Glycyl lysine isopeptide (Lys-Gly) (interchain with G-Cter in SUMO2) cross-link involves residue K281. The segment covering R290–P300 has biased composition (basic and acidic residues). The 79-residue stretch at H331–T409 folds into the RRM domain. N6-succinyllysine is present on K392. Residues V404–R476 form an RG-rich region region. The segment covering K408–R432 has biased composition (basic and acidic residues). A disordered region spans residues K408–R482. Residues G433–M445 are compositionally biased toward gly residues. Residue R457 is modified to Omega-N-methylarginine. At S466 the chain carries Phosphoserine. At R468 the chain carries Omega-N-methylarginine.

Forms homooligomers. Forms heterodimers with G3BP1. Interacts with NFKBIA (via N-terminus). Interacts (via NTF2 domain) with USP10; inhibiting stress granule formation. Interacts (via NTF2 domain) with CAPRIN1; promoting stress granule formation. Associates (via RG-rich region) with 40S ribosome subunits. Interacts with PABPC1. As to quaternary structure, (Microbial infection) Interacts with non-structural protein 3 (via C-terminus) of Sindbis virus and Semliki forest virus; this interaction inhibits the formation of host stress granules on viral mRNAs and the nsp3-G3BP2 complexes bind viral RNAs and probably orchestrate the assembly of viral replication complexes. (Microbial infection) Cleaved by foot-and-mouth disease virus leader protease; this cleavage suppresses the formation of cytoplasmic stress granules.

The protein resides in the cytoplasm. The protein localises to the stress granule. Under physiological conditions, G3BP2 adopts a compact state that is stabilized by intramolecular interactions between the RG-rich and the acidic regions that inhibit phase separation. Upon stress, polysomes disassemble and mRNAs are released in an unfolded protein-free state. Binding of unfolded mRNA to G3BP2 outcompetes the intramolecular interactions and RNA-bound G3BP2 adopts an expanded conformation in which the RG-rich region becomes exposed to engage in protein-protein and protein-RNA interactions, allowing physical cross-linking of RNA molecules to form protein-RNA condensates, leading to liquid-liquid phase separation (LLPS). Functionally, scaffold protein that plays an essential role in cytoplasmic stress granule formation which acts as a platform for antiviral signaling. Plays an essential role in stress granule formation. Stress granules are membraneless compartments that store mRNAs and proteins, such as stalled translation pre-initiation complexes, in response to stress. Promotes formation of stress granules phase-separated membraneless compartment by undergoing liquid-liquid phase separation (LLPS) upon unfolded RNA-binding: functions as a molecular switch that triggers RNA-dependent LLPS in response to a rise in intracellular free RNA concentrations. This chain is Ras GTPase-activating protein-binding protein 2, found in Homo sapiens (Human).